The sequence spans 403 residues: Argininosuccinate synthase (403 aa).

Residues 13-21 (AYSGGLDTS) and Ala40 each bind ATP. Residues Tyr91 and Ser96 each contribute to the L-citrulline site. Gly121 contacts ATP. The L-aspartate site is built by Thr123, Asn127, and Asp128. Asn127 contributes to the L-citrulline binding site. L-citrulline-binding residues include Arg131, Ser180, Ser189, Glu265, and Tyr277.

This sequence belongs to the argininosuccinate synthase family. Type 1 subfamily. Homotetramer.

Its subcellular location is the cytoplasm. It carries out the reaction L-citrulline + L-aspartate + ATP = 2-(N(omega)-L-arginino)succinate + AMP + diphosphate + H(+). The protein operates within amino-acid biosynthesis; L-arginine biosynthesis; L-arginine from L-ornithine and carbamoyl phosphate: step 2/3. In Leptospira borgpetersenii serovar Hardjo-bovis (strain JB197), this protein is Argininosuccinate synthase.